Reading from the N-terminus, the 90-residue chain is Probable two-component-system connector protein YmgA (90 aa).

Residues 63–80 (SDSGGPNRRTATADNKSM) are compositionally biased toward polar residues. Residues 63 to 90 (SDSGGPNRRTATADNKSMFNGKKINRIH) form a disordered region.

Functionally, probably a connector protein for RcsB/C regulation of biofilm formation, providing additional signal input into the two-component signaling pathway. May serve to stimulate biofilm maturation, probably via the Rcs phosphorelay. Mild overexpression at 16 degrees Celsius increases the production of colanic acid, an exopolysaccharide and matrix component, and reduces adhesive curli fimbriae expression. Both of these effects require RcsB. This Escherichia coli (strain K12) protein is Probable two-component-system connector protein YmgA (ymgA).